The sequence spans 241 residues: MAPWTRDEEWFREARRRLVERLVREGYIRSEHVKRAMLRVPRELFVPDELRHLAYEDTPLPIGHGQTISAPHMVAMMTEYADLKPGMKVLEVGAGSGYHAAVMAEVVAPSDEPREHWGHVYTIERIPELAEFARRNLERAGYADRVTVIVGDGSRGYPEKAPYDRIIVTAAAPDIPGPLIDQLKPGGKMVIPIGDRYLQHLYVVVKTRDGKIESRPVTPCLFVPLVGEYGWREYEADTTLA.

Residue S69 is part of the active site.

It belongs to the methyltransferase superfamily. L-isoaspartyl/D-aspartyl protein methyltransferase family.

The protein resides in the cytoplasm. It catalyses the reaction [protein]-L-isoaspartate + S-adenosyl-L-methionine = [protein]-L-isoaspartate alpha-methyl ester + S-adenosyl-L-homocysteine. In terms of biological role, catalyzes the methyl esterification of L-isoaspartyl residues in peptides and proteins that result from spontaneous decomposition of normal L-aspartyl and L-asparaginyl residues. It plays a role in the repair and/or degradation of damaged proteins. In Hyperthermus butylicus (strain DSM 5456 / JCM 9403 / PLM1-5), this protein is Protein-L-isoaspartate O-methyltransferase.